We begin with the raw amino-acid sequence, 239 residues long: MARGCLCCLKYMMFLFNLIFWLCGCGLLGVGIWLSVSQGNFATFSPSFPSLSAANLVIAIGTIVMVTGFLGCLGAIKENKCLLLSFFIVLLVILLAELILLILFFVYMDKVNENAKKDLKEGLLLYHTENNVGLKNAWNIIQAEMRCCGVTDYTDWYPVLGENTVPDRCCMENSQGCGRNATTPLWRTGCYEKVKMWFDDNKHVLGTVGMCILIMQILGMAFSMTLFQHIHRTGKKYDA.

Residues M1 to M13 lie on the Cytoplasmic side of the membrane. Residues F14–L34 traverse the membrane as a helical segment. Topologically, residues S35–N55 are extracellular. Residues L56 to I76 traverse the membrane as a helical segment. Over K77–S85 the chain is Cytoplasmic. Residues F86–V106 traverse the membrane as a helical segment. The Extracellular portion of the chain corresponds to Y107 to H203. N180 carries N-linked (GlcNAc...) asparagine glycosylation. The chain crosses the membrane as a helical span at residues V204 to M224. Topologically, residues T225–A239 are cytoplasmic.

The protein belongs to the tetraspanin (TM4SF) family. In terms of assembly, found in a complex with GP6. Post-translationally, glycosylated. In terms of tissue distribution, expressed in megakaryocytes and platelets (at protein level).

The protein resides in the membrane. This is Tetraspanin-9 (TSPAN9) from Homo sapiens (Human).